A 255-amino-acid chain; its full sequence is Enkurin (255 aa).

Residues 1–10 (MDSPCTSESI) are compositionally biased toward polar residues. 2 disordered regions span residues 1 to 25 (MDSPCTSESIYNLIPSDLKEPPQHP) and 67 to 96 (SKEKTLPPKKKFNRCSPKKPAVPLRTDHPV). The segment covering 73 to 83 (PPKKKFNRCSP) has biased composition (basic residues). Residues 83–89 (PKKPAVP) carry the SH3-binding motif. The Enkurin domain occupies 160–252 (KRNEDVKKAQ…VIEKHKIIYI (93 aa)). The interval 160-255 (KRNEDVKKAQ…KHKIIYIANK (96 aa)) is interaction with TRPC proteins. Positions 176–187 (IQENLKKAAMKR) constitute an IQ domain.

In terms of assembly, microtubule inner protein component of sperm flagellar doublet microtubules. Binds calmodulin via its IQ domain. Interacts with TRPC1, TRPC2, TRPC5, but not TRPC3. Interacts with CFAP45. High expression in testis and vomeronasal organ and lower expression in ovary, heart, lung, and brain. Not expressed in other tissues.

The protein resides in the cytoplasm. The protein localises to the cytoskeleton. Its subcellular location is the cilium axoneme. It localises to the flagellum axoneme. Adapter that functions to localize a calcium-sensitive signal transduction machinery in sperm to a calcium-permeable ion channel. Microtubule inner protein (MIP) part of the dynein-decorated doublet microtubules (DMTs) in cilia axoneme, which is required for motile cilia beating. The protein is Enkurin (Enkur) of Mus musculus (Mouse).